Consider the following 584-residue polypeptide: DNA mismatch repair protein MutL (584 aa).

This sequence belongs to the DNA mismatch repair MutL/HexB family.

In terms of biological role, this protein is involved in the repair of mismatches in DNA. It is required for dam-dependent methyl-directed DNA mismatch repair. May act as a 'molecular matchmaker', a protein that promotes the formation of a stable complex between two or more DNA-binding proteins in an ATP-dependent manner without itself being part of a final effector complex. The chain is DNA mismatch repair protein MutL from Syntrophomonas wolfei subsp. wolfei (strain DSM 2245B / Goettingen).